Consider the following 876-residue polypeptide: Envelope glycoprotein gp160 (876 aa).

A signal peptide spans 1-33; sequence MTVTMKVMKKNNRKSWSLYIAMALLIPCLSYSK. Topologically, residues 34–697 are extracellular; that stretch reads QLYATVYSGV…ITKWLWYIKI (664 aa). C55 and C75 are oxidised to a cystine. N-linked (GlcNAc...) asparagine; by host glycans are attached at residues N60, N89, N138, N144, N152, N156, N181, N187, N197, N229, N234, N241, N262, N276, N293, N323, N337, N357, and N361. 5 disulfide bridges follow: C120-C205, C127-C196, C132-C153, C218-C247, and C228-C239. The tract at residues 132-152 is V1; it reads CVDLQTNKTGLLNETINEMRN. Residues 153-196 are V2; it reads CSFNVTTVLTDKKEQKQALFYVSDLSKVNDSNAVNGTTYMLTNC. Residues 296 to 333 are V3; it reads CIREGIAEVQDIYTGPMRWRSMTLKRSNNTSPRSRVAY. Cysteines 296 and 334 form a disulfide. A CD4-binding loop region spans residues 369 to 379; the sequence is TSGGDAEVSHL. Intrachain disulfides connect C383-C452 and C390-C425. A V4 region spans residues 390–425; it reads CNTSGMFNYTFINCTKSGCQEIKGSNETNKNGTIPC. 8 N-linked (GlcNAc...) asparagine; by host glycosylation sites follow: N391, N397, N402, N415, N420, N449, N455, and N468. V5 regions lie at residues 468-478 and 470-478; these read NSTGENTLRPV and TGENTLRPV. The segment at 524-544 is fusion peptide; the sequence is AVGLGMLFLGVLSAAGSTMGA. An immunosuppression region spans residues 586–604; sequence RQLRARLQALETLIQNQQR. A disulfide bridge links C610 with C616. Residues N623, N638, and N650 are each glycosylated (N-linked (GlcNAc...) asparagine; by host). A coiled-coil region spans residues 646–680; that stretch reads QHINNVSSIIYDEIQAAQDQQEKNVKALLELDEWA. Residues 675–696 form an MPER; binding to GalCer region; the sequence is ELDEWASLWNWFDITKWLWYIK. A helical membrane pass occupies residues 698–718; sequence AIIIVGALIGIRVIMIILNLV. Residues 719–876 lie on the Cytoplasmic side of the membrane; it reads KNIRQGYQPL…IRQGAERILV (158 aa). The YXXL motif; contains endocytosis signal signature appears at 725–728; the sequence is YQPL.

This sequence belongs to the HIV-1 env protein family. The mature envelope protein (Env) consists of a homotrimer of non-covalently associated gp120-gp41 heterodimers. The resulting complex protrudes from the virus surface as a spike. There seems to be as few as 10 spikes on the average virion. Interacts with host CD4, CCR5 and CXCR4. Gp120 also interacts with the C-type lectins CD209/DC-SIGN and CLEC4M/DC-SIGNR (collectively referred to as DC-SIGN(R)). Gp120 and gp41 interact with GalCer. Gp120 interacts with host ITGA4/ITGB7 complex; on CD4+ T-cells, this interaction results in rapid activation of integrin ITGAL/LFA-1, which facilitates efficient cell-to-cell spreading of HIV-1. Gp120 interacts with cell-associated heparan sulfate; this interaction increases virus infectivity on permissive cells and may be involved in infection of CD4- cells. As to quaternary structure, the mature envelope protein (Env) consists of a homotrimer of non-covalently associated gp120-gp41 heterodimers. The resulting complex protrudes from the virus surface as a spike. There seems to be as few as 10 spikes on the average virion. Highly glycosylated by host. The high number of glycan on the protein is reffered to as 'glycan shield' because it contributes to hide protein sequence from adaptive immune system. Post-translationally, palmitoylation of the transmembrane protein and of Env polyprotein (prior to its proteolytic cleavage) is essential for their association with host cell membrane lipid rafts. Palmitoylation is therefore required for envelope trafficking to classical lipid rafts, but not for viral replication. In terms of processing, specific enzymatic cleavages in vivo yield mature proteins. Envelope glycoproteins are synthesized as an inactive precursor that is heavily N-glycosylated and processed likely by host cell furin in the Golgi to yield the mature SU and TM proteins. The cleavage site between SU and TM requires the minimal sequence [KR]-X-[KR]-R. About 2 of the 9 disulfide bonds of gp41 are reduced by P4HB/PDI, following binding to CD4 receptor.

It localises to the virion membrane. The protein resides in the host cell membrane. It is found in the host endosome membrane. In terms of biological role, oligomerizes in the host endoplasmic reticulum into predominantly trimers. In a second time, gp160 transits in the host Golgi, where glycosylation is completed. The precursor is then proteolytically cleaved in the trans-Golgi and thereby activated by cellular furin or furin-like proteases to produce gp120 and gp41. Functionally, attaches the virus to the host lymphoid cell by binding to the primary receptor CD4. This interaction induces a structural rearrangement creating a high affinity binding site for a chemokine coreceptor like CXCR4 and/or CCR5. Acts as a ligand for CD209/DC-SIGN and CLEC4M/DC-SIGNR, which are respectively found on dendritic cells (DCs), and on endothelial cells of liver sinusoids and lymph node sinuses. These interactions allow capture of viral particles at mucosal surfaces by these cells and subsequent transmission to permissive cells. HIV subverts the migration properties of dendritic cells to gain access to CD4+ T-cells in lymph nodes. Virus transmission to permissive T-cells occurs either in trans (without DCs infection, through viral capture and transmission), or in cis (following DCs productive infection, through the usual CD4-gp120 interaction), thereby inducing a robust infection. In trans infection, bound virions remain infectious over days and it is proposed that they are not degraded, but protected in non-lysosomal acidic organelles within the DCs close to the cell membrane thus contributing to the viral infectious potential during DCs' migration from the periphery to the lymphoid tissues. On arrival at lymphoid tissues, intact virions recycle back to DCs' cell surface allowing virus transmission to CD4+ T-cells. Its function is as follows. Acts as a class I viral fusion protein. Under the current model, the protein has at least 3 conformational states: pre-fusion native state, pre-hairpin intermediate state, and post-fusion hairpin state. During fusion of viral and target intracellular membranes, the coiled coil regions (heptad repeats) assume a trimer-of-hairpins structure, positioning the fusion peptide in close proximity to the C-terminal region of the ectodomain. The formation of this structure appears to drive apposition and subsequent fusion of viral and target cell membranes. Complete fusion occurs in host cell endosomes and is dynamin-dependent, however some lipid transfer might occur at the plasma membrane. The virus undergoes clathrin-dependent internalization long before endosomal fusion, thus minimizing the surface exposure of conserved viral epitopes during fusion and reducing the efficacy of inhibitors targeting these epitopes. Membranes fusion leads to delivery of the nucleocapsid into the cytoplasm. This Homo sapiens (Human) protein is Envelope glycoprotein gp160.